The following is a 522-amino-acid chain: Leucine-rich repeat transmembrane neuronal protein 1 (522 aa).

Positions 1-34 are cleaved as a signal peptide; sequence MDFLLLGLCLYWLLRRPSGVVLCLLGACFQMLPA. Residues 35–63 form the LRRNT domain; sequence APSGCPQLCRCEGRLLYCEALNLTEAPHN. Over 35–427 the chain is Extracellular; sequence APSGCPQLCR…HAENAVQIHK (393 aa). Residues Asn56 and Asn63 are each glycosylated (N-linked (GlcNAc...) asparagine). 10 LRR repeats span residues 64–87, 89–111, 112–135, 137–159, 161–183, 184–207, 209–231, 233–255, 256–278, and 279–302; these read LSGL…QFTG, MQLT…AFQK, LRRV…TFRP, PNLR…LFHG, RKLT…IFQD, CRSL…SFAG, FKLT…HFPR, ISLH…LDWV, WNLE…VFET, and VPHL…ILNS. Asn130 is a glycosylation site (N-linked (GlcNAc...) asparagine). In terms of domain architecture, LRRCT spans 314 to 365; sequence NLWDCGRNVCALASWLNNFQGRYDGNLQCASPEYAQGEDVLDAVYAFHLCED. Asn380 carries an N-linked (GlcNAc...) asparagine glycan. The disordered stretch occupies residues 382–401; it reads SDLGPPASSATTLADGGEGQ. A helical membrane pass occupies residues 428-448; that stretch reads VVTGTMALIFSFLIVVLVLYV. Residues 449–522 lie on the Cytoplasmic side of the membrane; the sequence is SWKCFPASLR…HQQPARECEV (74 aa).

The protein belongs to the LRRTM family. In terms of tissue distribution, predominantly expressed in forebrain regions including thalamus and cerebral cortex.

The protein localises to the cell membrane. The protein resides in the postsynaptic cell membrane. Functionally, exhibits strong synaptogenic activity, restricted to excitatory presynaptic differentiation, acting at both pre- and postsynaptic level. This Homo sapiens (Human) protein is Leucine-rich repeat transmembrane neuronal protein 1 (LRRTM1).